Reading from the N-terminus, the 484-residue chain is Perphorin-2 (484 aa).

N-linked (GlcNAc...) asparagine glycans are attached at residues N16, N240, N256, N265, N326, N330, N356, and N411.

It is found in the secreted. It localises to the extracellular space. The protein localises to the extracellular matrix. May be involved in conversion of asexual males and females to the sexual pathway. The protein is Perphorin-2 of Volvox carteri (Green alga).